We begin with the raw amino-acid sequence, 111 residues long: uncharacterized protein (111 aa).

The next 2 helical transmembrane spans lie at 7-29 (LYSS…RALY) and 49-71 (PSLL…SINL).

It is found in the membrane. This is an uncharacterized protein from Saccharomyces cerevisiae (strain ATCC 204508 / S288c) (Baker's yeast).